The following is an 822-amino-acid chain: Collagen alpha chain CG42342 (822 aa).

2 disordered regions span residues 1-45 (MRKH…VEAP) and 66-99 (RLAP…KERP). Over 1-104 (MRKHKAPPSG…SKERPRPTVR (104 aa)) the chain is Cytoplasmic. A compositionally biased stretch (polar residues) spans 11–25 (SPRTMAQDNSQSEPS). The segment covering 76 to 94 (INNSNNNSNISNNSSNSSS) has biased composition (low complexity). Residues 105-125 (FISLLHVASYVLCLCAFSFAL) traverse the membrane as a helical; Signal-anchor for type II membrane protein segment. Over 126-822 (YGNVRQTRLE…EYQDNLHNNE (697 aa)) the chain is Extracellular. A coiled-coil region spans residues 131-162 (QTRLEQRMQRLQQLDARIVELELRLEQQQLLH). Disordered stretches follow at residues 169-188 (QVLA…NGSQ), 205-297 (VSHL…GHPG), and 345-822 (LKGE…HNNE). The stretch at 194 to 222 (VRRELHRLRRDVSHLQLTRRQQRRQAAEA) forms a coiled coil. Collagen-like domains follow at residues 241 to 299 (QPGP…PGMD), 350 to 409 (GEPG…KGDR), 430 to 469 (GPPG…GKRG), 493 to 526 (RGPP…PGSL), 527 to 586 (GPRG…KGDK), 621 to 680 (GPPG…SGKA), and 681 to 740 (GIPG…KGEQ). Over residues 242 to 251 (PGPPGPPGPP) the composition is skewed to pro residues. Positions 284–293 (PGDKGQKGDV) are enriched in basic and acidic residues. Residues 360 to 402 (EAGQPGAPGERGPPGEIGAQGPQGEAGQPGVAGPPGVAGAPGT) show a composition bias toward low complexity. The span at 403-412 (KGDKGDRGDR) shows a compositional bias: basic and acidic residues. Residues 431 to 443 (PPGPAGPPGPPGE) are compositionally biased toward pro residues. A compositionally biased stretch (basic and acidic residues) spans 504–517 (KDGRDGRDGSKGEP). The span at 522–540 (EPGSLGPRGLDGLPGEPGI) shows a compositional bias: low complexity. Residues 567-579 (LMGPPGLPGPPGY) show a composition bias toward pro residues. The segment covering 583 to 602 (KGDKGDRGDSYRKMRRRQDD) has biased composition (basic and acidic residues). The span at 619-628 (PPGPPGPMGP) shows a compositional bias: pro residues. Basic and acidic residues predominate over residues 638–655 (RGLDGRKGDPGEKGHKGD). The segment covering 658–668 (PMGLPGPMGMR) has biased composition (low complexity). Positions 790–822 (TSDYEQEEEEDDEQAEDNENEYDEYQDNLHNNE) form a coiled coil. A compositionally biased stretch (acidic residues) spans 793–815 (YEQEEEEDDEQAEDNENEYDEYQ).

The protein localises to the cell membrane. The chain is Collagen alpha chain CG42342 from Drosophila melanogaster (Fruit fly).